Here is a 322-residue protein sequence, read N- to C-terminus: Cytochrome f (322 aa).

The first 35 residues, 1 to 35, serve as a signal peptide directing secretion; sequence MQTRNTFSWTWIREEITRSISVSLMIYIITWSSIS. Heme is bound by residues Y38, C58, C61, and H62. Residues 288 to 308 form a helical membrane-spanning segment; that stretch reads VQGLLFFLGSVVLAQIFLVLK.

It belongs to the cytochrome f family. As to quaternary structure, the 4 large subunits of the cytochrome b6-f complex are cytochrome b6, subunit IV (17 kDa polypeptide, petD), cytochrome f and the Rieske protein, while the 4 small subunits are PetG, PetL, PetM and PetN. The complex functions as a dimer. The cofactor is heme.

It is found in the plastid. The protein resides in the chloroplast thylakoid membrane. Component of the cytochrome b6-f complex, which mediates electron transfer between photosystem II (PSII) and photosystem I (PSI), cyclic electron flow around PSI, and state transitions. This chain is Cytochrome f, found in Aethionema grandiflorum (Persian stone-cress).